Here is a 284-residue protein sequence, read N- to C-terminus: tRNA uridine(34) hydroxylase (284 aa).

Residues 132–226 enclose the Rhodanese domain; sequence TGRPVVMLDT…YFEEVGGAHY (95 aa). Cys186 functions as the Cysteine persulfide intermediate in the catalytic mechanism.

Belongs to the TrhO family.

The catalysed reaction is uridine(34) in tRNA + AH2 + O2 = 5-hydroxyuridine(34) in tRNA + A + H2O. Catalyzes oxygen-dependent 5-hydroxyuridine (ho5U) modification at position 34 in tRNAs. This Burkholderia lata (strain ATCC 17760 / DSM 23089 / LMG 22485 / NCIMB 9086 / R18194 / 383) protein is tRNA uridine(34) hydroxylase.